Consider the following 494-residue polypeptide: Rho GTPase-activating protein 19 (494 aa).

Ala-2 carries the post-translational modification N-acetylalanine. Phosphoserine occurs at positions 7 and 31. The region spanning 102–308 is the Rho-GAP domain; the sequence is MSLKRKEKGV…FMIKHSQKLF (207 aa). The interval 399–451 is disordered; it reads QSLTQTPGREPSTPRVQKRARSRSFSGLIKRKVLGSQMTSEKKNSSPAPESVA. 3 positions are modified to phosphoserine: Ser-422, Ser-438, and Ser-470. At Thr-478 the chain carries Phosphothreonine.

Its function is as follows. GTPase activator for the Rho-type GTPases by converting them to an inactive GDP-bound state. The chain is Rho GTPase-activating protein 19 (Arhgap19) from Mus musculus (Mouse).